The primary structure comprises 248 residues: DNA repair protein RecO (248 aa).

The protein belongs to the RecO family.

In terms of biological role, involved in DNA repair and RecF pathway recombination. The polypeptide is DNA repair protein RecO (Bradyrhizobium sp. (strain BTAi1 / ATCC BAA-1182)).